We begin with the raw amino-acid sequence, 234 residues long: Chalcone--flavanone isomerase 1 (234 aa).

Substrate is bound by residues Thr-50, Asn-115, and Ser-192.

This sequence belongs to the chalcone isomerase family.

The enzyme catalyses a chalcone = a flavanone.. It participates in secondary metabolite biosynthesis; flavonoid biosynthesis. In terms of biological role, catalyzes the intramolecular cyclization of bicyclic chalcones into tricyclic (S)-flavanones. Responsible for the isomerization of 4,2',4',6'-tetrahydroxychalcone (also termed chalcone) into naringenin. This chain is Chalcone--flavanone isomerase 1 (CHI1), found in Vitis vinifera (Grape).